Reading from the N-terminus, the 357-residue chain is NmrA-like family domain-containing oxidoreductase notA' (357 aa).

NADP(+)-binding positions include 13-18, 39-43, 60-61, 81-83, Lys140, and 164-167; these read GATGAQ, RKPES, DG, TNS, and YMDV.

This sequence belongs to the NmrA-type oxidoreductase family.

NmrA-like family domain-containing oxidoreductase; part of the gene cluster that mediates the biosynthesis of notoamide, a fungal indole alkaloid that belongs to a family of natural products containing a characteristic bicyclo[2.2.2]diazaoctane core. The first step of notoamide biosynthesis involves coupling of L-proline and L-tryptophan by the bimodular NRPS notE', to produce cyclo-L-tryptophan-L-proline called brevianamide F. The reverse prenyltransferase notF' then acts as a deoxybrevianamide E synthase and converts brevianamide F to deoxybrevianamide E via reverse prenylation at C-2 of the indole ring leading to the bicyclo[2.2.2]diazaoctane core. Deoxybrevianamide E is further hydroxylated at C-6 of the indole ring, likely catalyzed by the cytochrome P450 monooxygenase notG', to yield 6-hydroxy-deoxybrevianamide E. 6-hydroxy-deoxybrevianamide E is a specific substrate of the prenyltransferase notC' for normal prenylation at C-7 to produce 6-hydroxy-7-prenyl-deoxybrevianamide, also called notoamide S. As the proposed pivotal branching point in notoamide biosynthesis, notoamide S can be diverted to notoamide E through an oxidative pyran ring closure putatively catalyzed by either notH' cytochrome P450 monooxygenase or the notD' FAD-linked oxidoreductase. This step would be followed by an indole 2,3-epoxidation-initiated pinacol-like rearrangement catalyzed by the notB' FAD-dependent monooxygenase leading to the formation of notoamide C and notoamide D. On the other hand notoamide S is converted to notoamide T by notH' (or notD'), a bifunctional oxidase that also functions as the intramolecular Diels-Alderase responsible for generation of (-)-notoamide T. To generate antipodal (+)-notoaminide T, notH (or notD) in Aspergillus strain MF297-2 is expected to catalyze a Diels-Alder reaction leading to the opposite stereochemistry. The remaining oxidoreductase notD' (or notH') likely catalyzes the oxidative pyran ring formation to yield (-)-stephacidin A. The FAD-dependent monooxygenase notI' is highly similar to notB' and is predicted to catalyze a similar conversion from (-)-stephacidin A to (+)-notoamide B via the 2,3-epoxidation of (-)-stephacidin A followed by a pinacol-type rearrangement. Finally, it remains unclear which enzyme could be responsible for the final hydroxylation steps leading to notoamide A and sclerotiamide. In Aspergillus versicolor, this protein is NmrA-like family domain-containing oxidoreductase notA'.